The sequence spans 155 residues: V-type proton ATPase 16 kDa proteolipid subunit c (155 aa).

At 1-10 the chain is on the lumenal side; that stretch reads MSESKSGPEY. Residues 11-33 form a helical membrane-spanning segment; sequence ASFFAVMGASAAMVFSALGAAYG. Over 34 to 55 the chain is Cytoplasmic; sequence TAKSGTGIAAMSVMRPEQIMKS. The helical transmembrane segment at 56–76 threads the bilayer; it reads IIPVVMAGIIAIYGLVVAVLI. At 77–92 the chain is on the lumenal side; sequence ANSLNDDISLYKSFLQ. A helical transmembrane segment spans residues 93–114; that stretch reads LGAGLSVGLSGLAAGFAIGIVG. Over 115 to 131 the chain is Cytoplasmic; that stretch reads DAGVRGTAQQPRLFVGM. The chain crosses the membrane as a helical span at residues 132–152; it reads ILILIFAEVLGLYGLIVALIL. Residues 153–155 lie on the Lumenal side of the membrane; sequence STK.

It belongs to the V-ATPase proteolipid subunit family. As to quaternary structure, V-ATPase is a heteromultimeric enzyme made up of two complexes: the ATP-hydrolytic V1 complex and the proton translocation V0 complex. The V1 complex consists of three catalytic AB heterodimers that form a heterohexamer, three peripheral stalks each consisting of EG heterodimers, one central rotor including subunits D and F, and the regulatory subunits C and H. The proton translocation complex V0 consists of the proton transport subunit a, a ring of proteolipid subunits c9c'', rotary subunit d, subunits e and f, and the accessory subunits ATP6AP1/Ac45 and ATP6AP2/PRR. Interacts with the V0 complex V-ATPase subunit a4 ATP6V0A4. Interacts with LASS2. Interacts with RNF182; this interaction leads to ubiquitination and degradation via the proteasome pathway. (Microbial infection) Interacts with HTLV-1 accessory protein p12I. Ubiquitinated by RNF182, leading to its degradation via the ubiquitin-proteasome pathway.

The protein localises to the cytoplasmic vesicle. Its subcellular location is the clathrin-coated vesicle membrane. It localises to the secretory vesicle. The protein resides in the synaptic vesicle membrane. Functionally, proton-conducting pore forming subunit of the V0 complex of vacuolar(H+)-ATPase (V-ATPase), a multisubunit enzyme composed of a peripheral complex (V1) that hydrolyzes ATP and a membrane integral complex (V0) that translocates protons. V-ATPase is responsible for acidifying and maintaining the pH of intracellular compartments, and in some cell types, it is targeted to the plasma membrane, where it is responsible for acidifying the extracellular environment. The sequence is that of V-type proton ATPase 16 kDa proteolipid subunit c (ATP6V0C) from Homo sapiens (Human).